A 354-amino-acid polypeptide reads, in one-letter code: Chorismate synthase (354 aa).

Arg-46 contacts NADP(+). Residues 123 to 125, 233 to 234, Gly-273, 288 to 292, and Arg-314 each bind FMN; these read RVS, NG, and KPTPS.

It belongs to the chorismate synthase family. As to quaternary structure, homotetramer. Requires FMNH2 as cofactor.

The catalysed reaction is 5-O-(1-carboxyvinyl)-3-phosphoshikimate = chorismate + phosphate. It participates in metabolic intermediate biosynthesis; chorismate biosynthesis; chorismate from D-erythrose 4-phosphate and phosphoenolpyruvate: step 7/7. In terms of biological role, catalyzes the anti-1,4-elimination of the C-3 phosphate and the C-6 proR hydrogen from 5-enolpyruvylshikimate-3-phosphate (EPSP) to yield chorismate, which is the branch point compound that serves as the starting substrate for the three terminal pathways of aromatic amino acid biosynthesis. This reaction introduces a second double bond into the aromatic ring system. This chain is Chorismate synthase, found in Campylobacter curvus (strain 525.92).